A 417-amino-acid chain; its full sequence is Aromatic-amino-acid aminotransferase 1 (417 aa).

Lys258 carries the N6-(pyridoxal phosphate)lysine modification.

The protein belongs to the class-I pyridoxal-phosphate-dependent aminotransferase family. Homodimer. It depends on pyridoxal 5'-phosphate as a cofactor.

The catalysed reaction is an aromatic L-alpha-amino acid + 2-oxoglutarate = an aromatic oxo-acid + L-glutamate. In terms of biological role, catalyzes the transamination of phenylalanine, tyrosine and tryptophan. Shows virtually no activity towards aspartic acid, alanine, valine or isoleucine. This Thermococcus litoralis (strain ATCC 51850 / DSM 5473 / JCM 8560 / NS-C) protein is Aromatic-amino-acid aminotransferase 1.